The primary structure comprises 61 residues: Conotoxin 3 (61 aa).

The first 21 residues, Met1–Ala21, serve as a signal peptide directing secretion. A propeptide spanning residues Val22 to Asn48 is cleaved from the precursor. Trp58 is subject to 6'-bromotryptophan.

The protein belongs to the conotoxin T superfamily. Contains 2 disulfide bonds that can be either 'C1-C3, C2-C4' or 'C1-C4, C2-C3', since these disulfide connectivities have been observed for conotoxins with cysteine framework V (for examples, see AC P0DQQ7 and AC P81755). In terms of processing, contains 2 disulfide bonds. As to expression, expressed by the venom duct.

It localises to the secreted. The polypeptide is Conotoxin 3 (Conus textile (Cloth-of-gold cone)).